A 304-amino-acid chain; its full sequence is CBY1-interacting BAR domain-containing protein 2 (304 aa).

Residues 6-217 (SRDSQVRVME…EKYDLERDLL (212 aa)) form a BAR-like region.

The protein belongs to the CIBAR family. In terms of assembly, homodimer (via BAR-like domain). Heterodimer (via BAR-like domain) with FAM92A. Interacts with CBY1. As to expression, restricted to certain tissues, most prominently expressed in multicilaited tissues.

Its subcellular location is the cytoplasm. It localises to the cytoskeleton. It is found in the microtubule organizing center. The protein resides in the centrosome. The protein localises to the centriole. Its subcellular location is the cilium basal body. May play a role in ciliogenesis. In cooperation with CBY1 may facilitate ciliogenesis likely by the recruitment and fusion of endosomal vesicles at distal appendages during early stages of ciliogenesis. The polypeptide is CBY1-interacting BAR domain-containing protein 2 (Homo sapiens (Human)).